Consider the following 427-residue polypeptide: UPF0761 membrane protein Cphamn1_1013 (427 aa).

The next 6 helical transmembrane spans lie at 51–71, 107–127, 147–167, 188–208, 218–238, and 251–271; these read LLSLIPLMAVVLSVLSVSPVF, TVPTVGGIFLLIIALFLISTI, FTLYWTVLTLGPIIIGSGLVA, ILSYLPLVNSFLAFFLLYMLV, AVSGAFLATWLFELSKQWFSF, and GALSVIPLLFFWIYLIWVVAL.

This sequence belongs to the UPF0761 family.

The protein resides in the cell inner membrane. The chain is UPF0761 membrane protein Cphamn1_1013 from Chlorobium phaeobacteroides (strain BS1).